A 286-amino-acid chain; its full sequence is Nucleotide-binding protein PSPA7_5038 (286 aa).

8 to 15 (GRSGSGKS) contacts ATP. 60–63 (DARN) contributes to the GTP binding site.

The protein belongs to the RapZ-like family.

Displays ATPase and GTPase activities. The protein is Nucleotide-binding protein PSPA7_5038 of Pseudomonas paraeruginosa (strain DSM 24068 / PA7) (Pseudomonas aeruginosa (strain PA7)).